The sequence spans 224 residues: dTTP/UTP pyrophosphatase (224 aa).

Residue D77 is the Proton acceptor of the active site.

It belongs to the Maf family. YhdE subfamily. The cofactor is a divalent metal cation.

It localises to the cytoplasm. It carries out the reaction dTTP + H2O = dTMP + diphosphate + H(+). The catalysed reaction is UTP + H2O = UMP + diphosphate + H(+). Nucleoside triphosphate pyrophosphatase that hydrolyzes dTTP and UTP. May have a dual role in cell division arrest and in preventing the incorporation of modified nucleotides into cellular nucleic acids. The protein is dTTP/UTP pyrophosphatase of Dehalococcoides mccartyi (strain ATCC BAA-2100 / JCM 16839 / KCTC 5957 / BAV1).